The following is a 362-amino-acid chain: Chorismate synthase (362 aa).

Arg-47 contacts NADP(+). Residues 124–126, Gly-286, 301–305, and Arg-327 each bind FMN; these read RSS and KPTAT.

It belongs to the chorismate synthase family. As to quaternary structure, homotetramer. FMNH2 is required as a cofactor.

It catalyses the reaction 5-O-(1-carboxyvinyl)-3-phosphoshikimate = chorismate + phosphate. Its pathway is metabolic intermediate biosynthesis; chorismate biosynthesis; chorismate from D-erythrose 4-phosphate and phosphoenolpyruvate: step 7/7. Its function is as follows. Catalyzes the anti-1,4-elimination of the C-3 phosphate and the C-6 proR hydrogen from 5-enolpyruvylshikimate-3-phosphate (EPSP) to yield chorismate, which is the branch point compound that serves as the starting substrate for the three terminal pathways of aromatic amino acid biosynthesis. This reaction introduces a second double bond into the aromatic ring system. The polypeptide is Chorismate synthase (Trichormus variabilis (strain ATCC 29413 / PCC 7937) (Anabaena variabilis)).